The chain runs to 252 residues: Spermatogenesis-associated protein 9 (252 aa).

The helical transmembrane segment at 145–167 (TSIMYASYAALIYLAVCVNAVLA) threads the bilayer. Over residues 208 to 221 (KAKPYRSLPEKPDN) the composition is skewed to basic and acidic residues. The disordered stretch occupies residues 208 to 235 (KAKPYRSLPEKPDNLLDQPKPPANKQSN).

The protein resides in the membrane. Its function is as follows. May play at role in testicular development/spermatogenesis and may be an important factor in male infertility. This chain is Spermatogenesis-associated protein 9 (Spata9), found in Mus musculus (Mouse).